A 387-amino-acid chain; its full sequence is Galactokinase (387 aa).

Glu-33–Asp-36 is a binding site for substrate. Residues Ser-67 and Gly-123 to Ser-129 each bind ATP. Mg(2+) contacts are provided by Ser-129 and Glu-161. Asp-173 acts as the Proton acceptor in catalysis. Tyr-223 contributes to the substrate binding site.

It belongs to the GHMP kinase family. GalK subfamily.

The protein resides in the cytoplasm. The enzyme catalyses alpha-D-galactose + ATP = alpha-D-galactose 1-phosphate + ADP + H(+). It participates in carbohydrate metabolism; galactose metabolism. Functionally, catalyzes the transfer of the gamma-phosphate of ATP to D-galactose to form alpha-D-galactose-1-phosphate (Gal-1-P). In Lacticaseibacillus casei (Lactobacillus casei), this protein is Galactokinase.